Here is a 164-residue protein sequence, read N- to C-terminus: Cytochrome c-type biogenesis protein CcmE (164 aa).

At 1-8 the chain is on the cytoplasmic side; that stretch reads MNPRRKSR. The helical; Signal-anchor for type II membrane protein transmembrane segment at 9–29 threads the bilayer; that stretch reads LYLAVVVLIGIGLTTTLVLYA. At 30 to 164 the chain is on the periplasmic side; that stretch reads LRSNIDLFYT…NSTAAQGNAS (135 aa). Positions 130 and 134 each coordinate heme. Over residues 131–150 the composition is skewed to basic and acidic residues; it reads DEKYTPPEVKEAMKENHTRP. Residues 131–164 are disordered; sequence DEKYTPPEVKEAMKENHTRPAEAYNSTAAQGNAS. The span at 154–164 shows a compositional bias: polar residues; it reads YNSTAAQGNAS.

The protein belongs to the CcmE/CycJ family.

It localises to the cell inner membrane. Functionally, heme chaperone required for the biogenesis of c-type cytochromes. Transiently binds heme delivered by CcmC and transfers the heme to apo-cytochromes in a process facilitated by CcmF and CcmH. The sequence is that of Cytochrome c-type biogenesis protein CcmE from Yersinia enterocolitica serotype O:8 / biotype 1B (strain NCTC 13174 / 8081).